The chain runs to 397 residues: Corticosteroid-binding globulin (397 aa).

A signal peptide spans methionine 1 to alanine 22. N-linked (GlcNAc...) asparagine glycans are attached at residues asparagine 89, asparagine 169, asparagine 217, and asparagine 232. Cortisol is bound at residue glutamine 247. Asparagine 253 carries an N-linked (GlcNAc...) asparagine glycan. Aspartate 279 contacts cortisol. An N-linked (GlcNAc...) asparagine glycan is attached at asparagine 320. Tryptophan 385 contributes to the cortisol binding site.

This sequence belongs to the serpin family. Expressed by the liver; secreted in plasma.

It localises to the secreted. In terms of biological role, major transport protein for glucocorticoids and progestins in the blood of almost all vertebrate species. The chain is Corticosteroid-binding globulin (Serpina6) from Mus musculus (Mouse).